The following is a 284-amino-acid chain: UPF0276 protein Ping_0944 (284 aa).

This sequence belongs to the UPF0276 family.

This is UPF0276 protein Ping_0944 from Psychromonas ingrahamii (strain DSM 17664 / CCUG 51855 / 37).